The sequence spans 290 residues: Programmed cell death 1 ligand 1 (290 aa).

An N-terminal signal peptide occupies residues 1 to 18; it reads MRIFAGIIFTACCHLLRA. An Ig-like V-type domain is found at 19 to 127; sequence FTITAPKDLY…YGGADYKRIT (109 aa). The Extracellular portion of the chain corresponds to 19–239; sequence FTITAPKDLY…ATHPPQNRTH (221 aa). Asparagine 35 carries an N-linked (GlcNAc...) asparagine glycan. 2 disulfide bridges follow: cysteine 40/cysteine 114 and cysteine 154/cysteine 208. Residues 133 to 224 enclose the Ig-like C2-type domain; it reads PYRKINQRIS…PGQNHTAELI (92 aa). N-linked (GlcNAc...) asparagine glycans are attached at residues asparagine 191, asparagine 199, asparagine 218, and asparagine 236. Residues 240–260 traverse the membrane as a helical segment; sequence WVLLGSILLFLIVVSTVLLFL. At 261 to 290 the chain is on the cytoplasmic side; sequence RKQVRMLDVEKCGVEDTSSKNRNDTQFEET.

The protein belongs to the immunoglobulin superfamily. BTN/MOG family. Interacts with PDCD1. Interacts with CMTM4 and CMTM6. Interacts with CD80. Ubiquitinated; STUB1 likely mediates polyubiquitination of PD-L1/CD274 triggering its degradation. Ubiquitinated by MARCHF8; leading to degradation. Deubiquitinated by USP22; leading to stabilization. Highly expressed in the heart, thymus, skeletal muscle, and lung. Weakly expressed in the kidney, spleen, thyroid, and liver. Expressed on activated dendritic cells, B-cells and macrophages. Expressed in numerous tumor cells lines of lymphoid origin.

It is found in the cell membrane. Its subcellular location is the early endosome membrane. The protein localises to the recycling endosome membrane. Its function is as follows. Plays a critical role in induction and maintenance of immune tolerance to self. As a ligand for the inhibitory receptor PDCD1/PD-1, modulates the activation threshold of T-cells and limits T-cell effector response. Through a yet unknown activating receptor, may costimulate T-cell subsets that predominantly produce interleukin-10 (IL10). The PDCD1-mediated inhibitory pathway is exploited by tumors to attenuate anti-tumor immunity and escape destruction by the immune system, thereby facilitating tumor survival. The interaction with PDCD1/PD-1 inhibits cytotoxic T lymphocytes (CTLs) effector function. The blockage of the PDCD1-mediated pathway results in the reversal of the exhausted T-cell phenotype and the normalization of the anti-tumor response, providing a rationale for cancer immunotherapy. This is Programmed cell death 1 ligand 1 (Cd274) from Mus musculus (Mouse).